A 93-amino-acid chain; its full sequence is uncharacterized protein (93 aa).

This is an uncharacterized protein from Saccharomyces cerevisiae (strain ATCC 204508 / S288c) (Baker's yeast).